Here is a 479-residue protein sequence, read N- to C-terminus: MRTDNIRNRKEQLKKQEKKDFDSSKDEETSTSDEEESSGGNRSKIAGKENHQNKNIINQKTNNNNNNNNIKEKDIIDSSVNNADNLKATDPPSAKYKKLAIRSVMGAFMIGFFTIVLSTDHFIVALFVIALQLLVFKEMIALRYIEAKEKKIPHFRTLNWFFLFTSFFFFYAKPILITLANYYPDIFQHFVRYHLWHSFSLYCIGFVLFILTLRKGVYRYQFSQLTWTLMILMMVVVQSNFLISNIYQGLIWFILPVSIIVCNDIFAYFNGFFLGKKFINRPLMKISPNKTWEGFIGATGWTLLFAYYFCGFLLKYDWIVCPKGNTGFMESLHCTRDPVFLEKEFIFPPEITTIAFKYLGITLLPFTYIPIQFHALVLALFGSLIAPFGGFFASGIKRAYKVKDFDTIFPGHGGVTDRTDCQFIMGLFIHVYYNTFIKTLEIDPTFIWQNIMMLSMEEKMVIYEKLKQSIEFTTGTITA.

The segment covering 1–28 (MRTDNIRNRKEQLKKQEKKDFDSSKDEE) has biased composition (basic and acidic residues). Residues 1–71 (MRTDNIRNRK…NNNNNNNNIK (71 aa)) are disordered. Topologically, residues 1–108 (MRTDNIRNRK…LAIRSVMGAF (108 aa)) are cytoplasmic. The span at 53-69 (NKNIINQKTNNNNNNNN) shows a compositional bias: low complexity. A helical transmembrane segment spans residues 109-129 (MIGFFTIVLSTDHFIVALFVI). The Extracellular segment spans residues 130-159 (ALQLLVFKEMIALRYIEAKEKKIPHFRTLN). The chain crosses the membrane as a helical span at residues 160–180 (WFFLFTSFFFFYAKPILITLA). Residues 181-192 (NYYPDIFQHFVR) lie on the Cytoplasmic side of the membrane. A helical membrane pass occupies residues 193-213 (YHLWHSFSLYCIGFVLFILTL). Over 214-240 (RKGVYRYQFSQLTWTLMILMMVVVQSN) the chain is Extracellular. A helical transmembrane segment spans residues 241-261 (FLISNIYQGLIWFILPVSIIV). Residues 262 to 293 (CNDIFAYFNGFFLGKKFINRPLMKISPNKTWE) are Cytoplasmic-facing. The chain crosses the membrane as a helical span at residues 294–314 (GFIGATGWTLLFAYYFCGFLL). The Extracellular portion of the chain corresponds to 315–375 (KYDWIVCPKG…FTYIPIQFHA (61 aa)). Residues 376 to 396 (LVLALFGSLIAPFGGFFASGI) form a helical membrane-spanning segment. The Cytoplasmic segment spans residues 397 to 479 (KRAYKVKDFD…IEFTTGTITA (83 aa)).

This sequence belongs to the CDS family.

The protein resides in the membrane. The enzyme catalyses a 1,2-diacyl-sn-glycero-3-phosphate + CTP + H(+) = a CDP-1,2-diacyl-sn-glycerol + diphosphate. The protein operates within phospholipid metabolism; CDP-diacylglycerol biosynthesis; CDP-diacylglycerol from sn-glycerol 3-phosphate: step 3/3. In Dictyostelium discoideum (Social amoeba), this protein is Probable phosphatidate cytidylyltransferase (cdsA).